The chain runs to 494 residues: MFS-type transporter lnaF (494 aa).

Residues 1 to 51 are disordered; the sequence is MTYDPENAMGEARADAPVEAEKEHEATQTTVKESTLGYDNSSDPSRRDSYR. The span at 12-26 shows a compositional bias: basic and acidic residues; sequence ARADAPVEAEKEHEA. Asn40, Asn58, and Asn68 each carry an N-linked (GlcNAc...) asparagine glycan. A run of 10 helical transmembrane segments spans residues 105 to 125, 128 to 148, 156 to 176, 203 to 223, 228 to 248, 290 to 310, 323 to 343, 354 to 374, 383 to 403, and 446 to 466; these read SLLIGAILGVLALGYTSDMFS, AGLLFTSGLVAIGTLMSTLAL, MLWYFVIVRGIAGFGVGGEYP, TLMATSAAPIQMIVYLICLIA, LPVTFHAIYSIATILPVIIMV, LAFFLYDFINFPNSIMSSTII, AIWQVILGALPVPGVIVGAWL, ILGFAGYMVLGFVIGGTFPHL, VLYGLLQALGHMGPGATIGLI, and STFYLAGGIAILGMIVYWFLP.

This sequence belongs to the major facilitator superfamily. Sugar transporter (TC 2.A.1.1) family.

It localises to the cell membrane. MFS-type transporter; part of the lna gene cluster that mediates the biosynthesis of diastereomeric piperazines. Lna and lnb clusters encode sets of enzymes that produce overlapping sets of previously undescribed metabolites such as piperazinomycin-like metabolites or morpholine. The lna and lnb biosynthetic pathways appear to be part of a signaling network that controls the formation of sclerotia, a resilient overwintering structure. May be involved in the secretion of the metabolites produced by the lna and lnb clusters. The polypeptide is MFS-type transporter lnaF (Aspergillus flavus (strain ATCC 200026 / FGSC A1120 / IAM 13836 / NRRL 3357 / JCM 12722 / SRRC 167)).